A 1406-amino-acid polypeptide reads, in one-letter code: DNA-directed RNA polymerase subunit beta' (1406 aa).

Residues C70, C72, C85, and C88 each coordinate Zn(2+). Mg(2+) contacts are provided by D460, D462, and D464. Zn(2+) is bound by residues C814, C888, C895, and C898.

The protein belongs to the RNA polymerase beta' chain family. As to quaternary structure, the RNAP catalytic core consists of 2 alpha, 1 beta, 1 beta' and 1 omega subunit. When a sigma factor is associated with the core the holoenzyme is formed, which can initiate transcription. Requires Mg(2+) as cofactor. Zn(2+) serves as cofactor.

The enzyme catalyses RNA(n) + a ribonucleoside 5'-triphosphate = RNA(n+1) + diphosphate. DNA-dependent RNA polymerase catalyzes the transcription of DNA into RNA using the four ribonucleoside triphosphates as substrates. This is DNA-directed RNA polymerase subunit beta' from Sodalis glossinidius (strain morsitans).